A 252-amino-acid chain; its full sequence is MQVDLNCDLGEAFGNYSFGGDHQIIPLITSANIACGFHAGDENVMNETVKLAKEHGVGIGAHPGFHDLQGFGRRNIDMAPDEIYTLVAYQLGALSAFSRIHDVKINHVKPHGALYNMGARDKDIAHAIAQAVYDVDPSLILVGLSNTLLISEAEAVGLKTASEVFADRRYESNGQLVSRKESDAVISDTEAAINQVVKMVKDNKVTAKDGTEIDIQADTICVHGDGAHALEFVSKIRERLTKEGISITKLGG.

This sequence belongs to the LamB/PxpA family. As to quaternary structure, forms a complex composed of PxpA, PxpB and PxpC.

It carries out the reaction 5-oxo-L-proline + ATP + 2 H2O = L-glutamate + ADP + phosphate + H(+). Catalyzes the cleavage of 5-oxoproline to form L-glutamate coupled to the hydrolysis of ATP to ADP and inorganic phosphate. This is 5-oxoprolinase subunit A from Staphylococcus carnosus (strain TM300).